The following is a 782-amino-acid chain: Beta-mannosyltransferase 9 (782 aa).

The Cytoplasmic segment spans residues 1 to 26 (MEKLIQSTISLFISLSLKISTKSYKS). The chain crosses the membrane as a helical span at residues 27-47 (IISILFIISLLSIILTTTITV). The Extracellular portion of the chain corresponds to 48–782 (YHDPERIITT…GKDKGKDKSN (735 aa)). The segment at 66 to 96 (KSVFTASSPKQQDKLQQEIDQHQSDNSHEQQ) is disordered. Basic and acidic residues predominate over residues 76-96 (QQDKLQQEIDQHQSDNSHEQQ). N445, N648, and N699 each carry an N-linked (GlcNAc...) asparagine glycan.

The protein belongs to the BMT family.

The protein localises to the membrane. Beta-mannosyltransferase involved in cell wall biosynthesis through beta-1,2-mannosylation of cell wall phosphopeptidomannan. The sequence is that of Beta-mannosyltransferase 9 (BMT9) from Candida albicans (strain SC5314 / ATCC MYA-2876) (Yeast).